The primary structure comprises 503 residues: Long-chain-aldehyde dehydrogenase (503 aa).

Residue 218-224 (GYGAEVG) coordinates NAD(+). Residues Glu262 and Cys301 contribute to the active site.

Belongs to the aldehyde dehydrogenase family. As to quaternary structure, homotetramer.

It catalyses the reaction a long-chain fatty aldehyde + NAD(+) + H2O = a long-chain fatty acid + NADH + 2 H(+). Completely inhibited by p-chloromercuribenzoate and N-ethylmaleimide. Strongly inhibited by iodoacetate. Inhibited by Pb(2+), Fe(3+), Ag(+) and Hg(2+) and partially inhibited by several other metal ions Mn(2+), Zn(2+) and Cu(2+). Functionally, aldehyde dehydrogenase that shows activity toward n-alkanals (C(4) to C(14)), with a preference for longer carbon chains. The best substrate is tetradecanal. The protein is Long-chain-aldehyde dehydrogenase (ald1) of Acinetobacter sp.